Here is a 323-residue protein sequence, read N- to C-terminus: Formyltetrahydrofolate deformylase 1, mitochondrial (323 aa).

Residues 1–25 (MIRRITERASGFAKNIPILKSSRFH) constitute a mitochondrion transit peptide. The region spanning 41 to 124 (VHVFHCQDAV…SVVRVPSIDP (84 aa)) is the ACT domain. Asp-267 is a catalytic residue.

It belongs to the PurU family. In terms of tissue distribution, expressed in leaves, cotyledons, roots, seeds and flowers.

The protein localises to the mitochondrion. The enzyme catalyses (6R)-10-formyltetrahydrofolate + H2O = (6S)-5,6,7,8-tetrahydrofolate + formate + H(+). Deformylase involved in photorespiration. Prevents excessive accumulation of 5-formyl tetrahydrofolate (THF), a potent inhibitor of the Gly decarboxylase/Ser hydroxymethyltransferase complex. This is Formyltetrahydrofolate deformylase 1, mitochondrial (PURU1) from Arabidopsis thaliana (Mouse-ear cress).